Consider the following 508-residue polypeptide: Light-independent protochlorophyllide reductase subunit B (508 aa).

D36 is a binding site for [4Fe-4S] cluster. Catalysis depends on D294, which acts as the Proton donor. Residue 429–430 participates in substrate binding; it reads GM.

The protein belongs to the ChlB/BchB/BchZ family. As to quaternary structure, protochlorophyllide reductase is composed of three subunits; ChlL, ChlN and ChlB. Forms a heterotetramer of two ChlB and two ChlN subunits. It depends on [4Fe-4S] cluster as a cofactor.

It catalyses the reaction chlorophyllide a + oxidized 2[4Fe-4S]-[ferredoxin] + 2 ADP + 2 phosphate = protochlorophyllide a + reduced 2[4Fe-4S]-[ferredoxin] + 2 ATP + 2 H2O. Its pathway is porphyrin-containing compound metabolism; chlorophyll biosynthesis (light-independent). Its function is as follows. Component of the dark-operative protochlorophyllide reductase (DPOR) that uses Mg-ATP and reduced ferredoxin to reduce ring D of protochlorophyllide (Pchlide) to form chlorophyllide a (Chlide). This reaction is light-independent. The NB-protein (ChlN-ChlB) is the catalytic component of the complex. In Picosynechococcus sp. (strain ATCC 27264 / PCC 7002 / PR-6) (Agmenellum quadruplicatum), this protein is Light-independent protochlorophyllide reductase subunit B.